The primary structure comprises 411 residues: tRNA pseudouridine synthase Pus10 (411 aa).

The region spanning 65 to 192 (ALAKCHLPTR…SGQVKVVRNP (128 aa)) is the THUMP domain. Aspartate 244 (nucleophile) is an active-site residue. The substrate site is built by tyrosine 305 and tyrosine 376.

The protein belongs to the pseudouridine synthase Pus10 family.

It carries out the reaction uridine(54) in tRNA = pseudouridine(54) in tRNA. The enzyme catalyses uridine(55) in tRNA = pseudouridine(55) in tRNA. In terms of biological role, responsible for synthesis of pseudouridine from uracil-54 and uracil-55 in the psi GC loop of transfer RNAs. This is tRNA pseudouridine synthase Pus10 from Pyrobaculum arsenaticum (strain DSM 13514 / JCM 11321 / PZ6).